The following is a 299-amino-acid chain: Spermatocyte protein spe-11 (299 aa).

The segment at 1–38 (MSDEEIDISTALNNKTTPKKKSLKRNSNSQEGYESPEE) is disordered.

In terms of tissue distribution, expressed in mature sperm.

The protein resides in the cytoplasm. It is found in the perinuclear region. Functionally, paternally sperm-supplied factor required for embryogenesis. Plays a role in preventing polyspermy possibly by promoting the formation of a continuous and cohesive eggshell chitin layer. This chain is Spermatocyte protein spe-11 (spe-11), found in Caenorhabditis elegans.